Consider the following 171-residue polypeptide: 3-hydroxydecanoyl-[acyl-carrier-protein] dehydratase (171 aa).

Residue His-70 is part of the active site.

Belongs to the thioester dehydratase family. FabA subfamily. As to quaternary structure, homodimer.

The protein localises to the cytoplasm. The catalysed reaction is a (3R)-hydroxyacyl-[ACP] = a (2E)-enoyl-[ACP] + H2O. It carries out the reaction (3R)-hydroxydecanoyl-[ACP] = (2E)-decenoyl-[ACP] + H2O. The enzyme catalyses (2E)-decenoyl-[ACP] = (3Z)-decenoyl-[ACP]. Its pathway is lipid metabolism; fatty acid biosynthesis. Its function is as follows. Necessary for the introduction of cis unsaturation into fatty acids. Catalyzes the dehydration of (3R)-3-hydroxydecanoyl-ACP to E-(2)-decenoyl-ACP and then its isomerization to Z-(3)-decenoyl-ACP. Can catalyze the dehydratase reaction for beta-hydroxyacyl-ACPs with saturated chain lengths up to 16:0, being most active on intermediate chain length. This chain is 3-hydroxydecanoyl-[acyl-carrier-protein] dehydratase, found in Shewanella sp. (strain MR-4).